The following is a 743-amino-acid chain: Cytosolic endo-beta-N-acetylglucosaminidase (743 aa).

The residue at position 1 (methionine 1) is an N-acetylmethionine. Residues 1 to 11 (MEAAAVTVTRS) show a composition bias toward low complexity. The disordered stretch occupies residues 1–55 (MEAAAVTVTRSATRRRRRQLQGLAAPEAGTQEEQEDQEPRPRRRRPGRSIKDEEE). Residue serine 66 is modified to Phosphoserine. The BRCT domain occupies 291-383 (RVFFDSCDGF…DFFQNQDKFW (93 aa)).

Belongs to the glycosyl hydrolase 85 family. As to expression, widely expressed. Expressed at higher level in thymus and spleen.

It localises to the cytoplasm. Its subcellular location is the cytosol. It carries out the reaction an N(4)-(oligosaccharide-(1-&gt;3)-[oligosaccharide-(1-&gt;6)]-beta-D-Man-(1-&gt;4)-beta-D-GlcNAc-(1-&gt;4)-alpha-D-GlcNAc)-L-asparaginyl-[protein] + H2O = an oligosaccharide-(1-&gt;3)-[oligosaccharide-(1-&gt;6)]-beta-D-Man-(1-&gt;4)-D-GlcNAc + N(4)-(N-acetyl-beta-D-glucosaminyl)-L-asparaginyl-[protein]. Functionally, endoglycosidase that releases N-glycans from glycoproteins by cleaving the beta-1,4-glycosidic bond in the N,N'-diacetylchitobiose core. Involved in the processing of free oligosaccharides in the cytosol. The sequence is that of Cytosolic endo-beta-N-acetylglucosaminidase (ENGASE) from Homo sapiens (Human).